A 670-amino-acid chain; its full sequence is DEAD-box ATP-dependent RNA helicase 16 (670 aa).

Positions 1 to 10 are enriched in low complexity; sequence MAAAAAASSM. The segment at 1 to 97 is disordered; sequence MAAAAAASSM…EEREVSFDEL (97 aa). Composition is skewed to basic and acidic residues over residues 18 to 30 and 40 to 49; these read AATEQEVENHDEA and NDGHTAHAAE. A Q motif motif is present at residues 92–120; sequence VSFDELGLDEQLKRALRKKGLDKATPIQR. In terms of domain architecture, Helicase ATP-binding spans 123–306; the sequence is IPLILEGKDV…KLLLHNPFIL (184 aa). ATP is bound at residue 136–143; it reads AKTGSGKT. The short motif at 254–257 is the DEAD box element; the sequence is DEAD. The Helicase C-terminal domain occupies 340–523; the sequence is LVLLKLELIQ…PFPLLTKNAV (184 aa). The segment at 616–670 is disordered; that stretch reads DIDKPRRRKRMGFKGGSGRSSDPLKTFSAEGKSRRRGRKERDGEQDRRKRKKVES. A compositionally biased stretch (basic and acidic residues) spans 654 to 670; sequence KERDGEQDRRKRKKVES.

It belongs to the DEAD box helicase family. DDX56/DBP9 subfamily.

The enzyme catalyses ATP + H2O = ADP + phosphate + H(+). This Oryza sativa subsp. japonica (Rice) protein is DEAD-box ATP-dependent RNA helicase 16.